The following is an 84-amino-acid chain: Small ribosomal subunit protein uS17 (84 aa).

The protein belongs to the universal ribosomal protein uS17 family. Part of the 30S ribosomal subunit.

Its function is as follows. One of the primary rRNA binding proteins, it binds specifically to the 5'-end of 16S ribosomal RNA. This chain is Small ribosomal subunit protein uS17, found in Actinobacillus pleuropneumoniae serotype 5b (strain L20).